We begin with the raw amino-acid sequence, 170 residues long: Cyclic pyranopterin monophosphate synthase (170 aa).

Residues 75–77 and 113–114 contribute to the substrate site; these read LCH and ME. Asp-128 is an active-site residue.

Belongs to the MoaC family. As to quaternary structure, homohexamer; trimer of dimers.

It carries out the reaction (8S)-3',8-cyclo-7,8-dihydroguanosine 5'-triphosphate = cyclic pyranopterin phosphate + diphosphate. The protein operates within cofactor biosynthesis; molybdopterin biosynthesis. In terms of biological role, catalyzes the conversion of (8S)-3',8-cyclo-7,8-dihydroguanosine 5'-triphosphate to cyclic pyranopterin monophosphate (cPMP). In Pelotomaculum thermopropionicum (strain DSM 13744 / JCM 10971 / SI), this protein is Cyclic pyranopterin monophosphate synthase.